Consider the following 209-residue polypeptide: Orotate phosphoribosyltransferase (209 aa).

5-phospho-alpha-D-ribose 1-diphosphate contacts are provided by residues Arg-96, Lys-100, His-102, and 122-130 (EDLISTGGS). Ser-126 is a binding site for orotate.

This sequence belongs to the purine/pyrimidine phosphoribosyltransferase family. PyrE subfamily. Homodimer. Mg(2+) serves as cofactor.

The enzyme catalyses orotidine 5'-phosphate + diphosphate = orotate + 5-phospho-alpha-D-ribose 1-diphosphate. Its pathway is pyrimidine metabolism; UMP biosynthesis via de novo pathway; UMP from orotate: step 1/2. Catalyzes the transfer of a ribosyl phosphate group from 5-phosphoribose 1-diphosphate to orotate, leading to the formation of orotidine monophosphate (OMP). The protein is Orotate phosphoribosyltransferase of Listeria monocytogenes serotype 4b (strain F2365).